Here is a 249-residue protein sequence, read N- to C-terminus: Type III pantothenate kinase (249 aa).

6–13 (DIGNSRTK) is an ATP binding site. Residues Y89 and 96–99 (GIDR) each bind substrate. The active-site Proton acceptor is D98. Residue D119 coordinates K(+). T122 lines the ATP pocket. Residue T174 participates in substrate binding.

The protein belongs to the type III pantothenate kinase family. In terms of assembly, homodimer. Requires NH4(+) as cofactor. K(+) is required as a cofactor.

It is found in the cytoplasm. It carries out the reaction (R)-pantothenate + ATP = (R)-4'-phosphopantothenate + ADP + H(+). The protein operates within cofactor biosynthesis; coenzyme A biosynthesis; CoA from (R)-pantothenate: step 1/5. In terms of biological role, catalyzes the phosphorylation of pantothenate (Pan), the first step in CoA biosynthesis. In Colwellia psychrerythraea (strain 34H / ATCC BAA-681) (Vibrio psychroerythus), this protein is Type III pantothenate kinase.